We begin with the raw amino-acid sequence, 303 residues long: GPN-loop GTPase 2 (303 aa).

29–34 (GSGKST) provides a ligand contact to GTP. A Gly-Pro-Asn (GPN)-loop; involved in dimer interface motif is present at residues 85–87 (GPN). 187–190 (SKMD) is a GTP binding site.

The protein belongs to the GPN-loop GTPase family. In terms of assembly, heterodimers with gpn1 or gpn3. Binds to RNA polymerase II (RNAPII).

Functionally, small GTPase required for proper localization of RNA polymerase II and III (RNAPII and RNAPIII). May act at an RNAP assembly step prior to nuclear import. The sequence is that of GPN-loop GTPase 2 from Xenopus tropicalis (Western clawed frog).